Consider the following 147-residue polypeptide: Small ribosomal subunit protein uS12 (147 aa).

The protein belongs to the universal ribosomal protein uS12 family. In terms of assembly, part of the 30S ribosomal subunit.

Its function is as follows. With S4 and S5 plays an important role in translational accuracy. Located at the interface of the 30S and 50S subunits. In Methanococcus maripaludis (strain C7 / ATCC BAA-1331), this protein is Small ribosomal subunit protein uS12.